Reading from the N-terminus, the 396-residue chain is Cellular tumor antigen p53 (396 aa).

Residues 1-44 are transcription activation (acidic); the sequence is MADLAENVSLPLSQESFEDLWKMNLNLVAVQPPETESWVGYDNF. Residues 63 to 89 form a disordered region; it reads ATEPAPQPSISTLDTGSPPTSTVPTTS. The segment covering 77 to 89 has biased composition (low complexity); the sequence is TGSPPTSTVPTTS. A DNA-binding region spans residues 90-281; sequence DYPGALGFQL…KTEEINLKKQ (192 aa). Zn(2+)-binding residues include C164, H167, C227, and C231. The interval 262 to 269 is interaction with DNA; sequence RVCACPGR. A Bipartite nuclear localization signal motif is present at residues 297–317; sequence KRAMKEASLPAPQPGASKKTK. The segment at 301–322 is disordered; that stretch reads KEASLPAPQPGASKKTKSSPAV. Residues 325 to 356 are oligomerization; that stretch reads DEIYTLQIRGKEKYEMLKKFNDSLELSELVPV. Positions 339 to 350 match the Nuclear export signal motif; it reads EMLKKFNDSLEL. Positions 369 to 392 are basic (repression of DNA-binding); the sequence is KRVAKRDFGVGPKKRKKLLVKEEK.

Belongs to the p53 family. Binds DNA as a homotetramer. Requires Zn(2+) as cofactor.

The protein localises to the cytoplasm. It localises to the nucleus. Its function is as follows. Multifunctional transcription factor that induces cell cycle arrest, DNA repair or apoptosis upon binding to its target DNA sequence. Acts as a tumor suppressor in many tumor types; induces growth arrest or apoptosis depending on the physiological circumstances and cell type. Negatively regulates cell division by controlling expression of a set of genes required for this process. One of the activated genes is an inhibitor of cyclin-dependent kinases. Apoptosis induction seems to be mediated either by stimulation of BAX and FAS antigen expression, or by repression of Bcl-2 expression. This chain is Cellular tumor antigen p53 (tp53), found in Oncorhynchus mykiss (Rainbow trout).